The primary structure comprises 736 residues: Catalase-peroxidase (736 aa).

The tract at residues 1 to 30 is disordered; that stretch reads MGGNVMTDDKMNSVTSGANKQETGRDMSNR. Over residues 12 to 21 the composition is skewed to polar residues; sequence NSVTSGANKQ. A cross-link (tryptophyl-tyrosyl-methioninium (Trp-Tyr) (with M-250)) is located at residues 101-224; sequence WHSAGTYRAG…LAAVQMGLIY (124 aa). The Proton acceptor role is filled by histidine 102. Residues 224 to 250 constitute a cross-link (tryptophyl-tyrosyl-methioninium (Tyr-Met) (with W-101)); sequence YVNPEGPNGNPDPIAAAKDIREVFARM. Residue histidine 265 coordinates heme b. A disordered region spans residues 351 to 373; the sequence is KGGAGAGTIPDAHDPSKRHAPSM.

This sequence belongs to the peroxidase family. Peroxidase/catalase subfamily. In terms of assembly, homodimer or homotetramer. The cofactor is heme b. In terms of processing, formation of the three residue Trp-Tyr-Met cross-link is important for the catalase, but not the peroxidase activity of the enzyme.

The enzyme catalyses H2O2 + AH2 = A + 2 H2O. It carries out the reaction 2 H2O2 = O2 + 2 H2O. Functionally, bifunctional enzyme with both catalase and broad-spectrum peroxidase activity. In Methanosarcina acetivorans (strain ATCC 35395 / DSM 2834 / JCM 12185 / C2A), this protein is Catalase-peroxidase.